Reading from the N-terminus, the 465-residue chain is L-seryl-tRNA(Sec) selenium transferase (465 aa).

An N6-(pyridoxal phosphate)lysine modification is found at Lys-294.

This sequence belongs to the SelA family. Pyridoxal 5'-phosphate serves as cofactor.

It is found in the cytoplasm. The catalysed reaction is L-seryl-tRNA(Sec) + selenophosphate + H(+) = L-selenocysteinyl-tRNA(Sec) + phosphate. It participates in aminoacyl-tRNA biosynthesis; selenocysteinyl-tRNA(Sec) biosynthesis; selenocysteinyl-tRNA(Sec) from L-seryl-tRNA(Sec) (bacterial route): step 1/1. Converts seryl-tRNA(Sec) to selenocysteinyl-tRNA(Sec) required for selenoprotein biosynthesis. This is L-seryl-tRNA(Sec) selenium transferase from Mannheimia succiniciproducens (strain KCTC 0769BP / MBEL55E).